A 564-amino-acid polypeptide reads, in one-letter code: 2-succinyl-5-enolpyruvyl-6-hydroxy-3-cyclohexene-1-carboxylate synthase (564 aa).

Belongs to the TPP enzyme family. MenD subfamily. Homodimer. The cofactor is Mg(2+). Requires Mn(2+) as cofactor. It depends on thiamine diphosphate as a cofactor.

It catalyses the reaction isochorismate + 2-oxoglutarate + H(+) = 5-enolpyruvoyl-6-hydroxy-2-succinyl-cyclohex-3-ene-1-carboxylate + CO2. Its pathway is quinol/quinone metabolism; 1,4-dihydroxy-2-naphthoate biosynthesis; 1,4-dihydroxy-2-naphthoate from chorismate: step 2/7. The protein operates within quinol/quinone metabolism; menaquinone biosynthesis. In terms of biological role, catalyzes the thiamine diphosphate-dependent decarboxylation of 2-oxoglutarate and the subsequent addition of the resulting succinic semialdehyde-thiamine pyrophosphate anion to isochorismate to yield 2-succinyl-5-enolpyruvyl-6-hydroxy-3-cyclohexene-1-carboxylate (SEPHCHC). The chain is 2-succinyl-5-enolpyruvyl-6-hydroxy-3-cyclohexene-1-carboxylate synthase from Vibrio vulnificus (strain CMCP6).